A 508-amino-acid polypeptide reads, in one-letter code: MGLPWYRVHTVVLNDPGRLLSVHIMHTALVSGWAGSMALYELAVFDPSDPVLDPMWRQGMFVIPFMTRLGITNSWGGWSITGGTITNPGIWSYEGVAGAHIVFSGLCFLAAIWHWVYWDLEIFCDERTGKPSLDLPKIFGIHLFLSGVTCFGFGAFHVTGLYGPGIWVSDPYGLTGKVQSVNPAWGTEGFDPFVPGGIASHHIAAGTLGILAGLFHLSVRPPQRLYKGLRMGNIETVLSSSIAAVFFAAFVVAGTMWYGSATTPIELFGPTRYQWDQGYFQQEIYRRVGAGLAENLSLSEAWSKIPEKLAFYDYIGNNPAKGGLFRAGSMDNGDGIAVGWLGHPIFRDKEGHELFVRRMPTFFETFPVVLVDGDGIVRADVPFRRAESKYSVEQVGVTVEFYGGELNGVSYGDPATVKKYARRAQLGEIFELDRATLKSDGVFRSSPRGWFTFGHATFALLFFFGHIWHGARTLFRDVFAGIDPDLDAQVEFGTFQKLGDPTTRRQVV.

Transmembrane regions (helical) follow at residues 21–36 (SVHIMHTALVSGWAGS), 101–115 (IVFSGLCFLAAIWHW), 140–156 (GIHLFLSGVTCFGFGAF), 203–218 (IAAGTLGILAGLFHLS), 237–252 (VLSSSIAAVFFAAFVV), and 457–472 (TFALLFFFGHIWHGAR).

This sequence belongs to the PsbB/PsbC family. PsbB subfamily. PSII is composed of 1 copy each of membrane proteins PsbA, PsbB, PsbC, PsbD, PsbE, PsbF, PsbH, PsbI, PsbJ, PsbK, PsbL, PsbM, PsbT, PsbX, PsbY, PsbZ, Psb30/Ycf12, at least 3 peripheral proteins of the oxygen-evolving complex and a large number of cofactors. It forms dimeric complexes. It depends on Binds multiple chlorophylls. PSII binds additional chlorophylls, carotenoids and specific lipids. as a cofactor.

The protein resides in the plastid. It localises to the chloroplast thylakoid membrane. Its function is as follows. One of the components of the core complex of photosystem II (PSII). It binds chlorophyll and helps catalyze the primary light-induced photochemical processes of PSII. PSII is a light-driven water:plastoquinone oxidoreductase, using light energy to abstract electrons from H(2)O, generating O(2) and a proton gradient subsequently used for ATP formation. This chain is Photosystem II CP47 reaction center protein, found in Drimys granadensis.